The primary structure comprises 1577 residues: Pentafunctional AROM polypeptide (1577 aa).

The interval 1-384 (MSMKMADPTK…YEPKASVVSN (384 aa)) is 3-dehydroquinate synthase. NAD(+) is bound by residues 48–50 (DTN), 85–88 (ENSK), 116–118 (GGV), and Asp121. Arg132 is a 7-phospho-2-dehydro-3-deoxy-D-arabino-heptonate binding site. Residue 141 to 142 (TT) participates in NAD(+) binding. 2 residues coordinate 7-phospho-2-dehydro-3-deoxy-D-arabino-heptonate: Asp148 and Lys154. Lys163 is a binding site for NAD(+). A 7-phospho-2-dehydro-3-deoxy-D-arabino-heptonate-binding site is contributed by Asn164. Residues 181-184 (FIDT) and Asn192 each bind NAD(+). Residue Glu196 participates in Zn(2+) binding. Residues 196–199 (EVIK) and Lys250 contribute to the 7-phospho-2-dehydro-3-deoxy-D-arabino-heptonate site. Glu260 acts as the Proton acceptor; for 3-dehydroquinate synthase activity in catalysis. 7-phospho-2-dehydro-3-deoxy-D-arabino-heptonate-binding positions include 264 to 268 (RNLLN) and His271. Position 271 (His271) interacts with Zn(2+). The Proton acceptor; for 3-dehydroquinate synthase activity role is filled by His275. Positions 287 and 356 each coordinate 7-phospho-2-dehydro-3-deoxy-D-arabino-heptonate. Position 287 (His287) interacts with Zn(2+). Residues 397 to 842 (VIPGVPKSLN…WDALKQKFGV (446 aa)) form an EPSP synthase region. Catalysis depends on Cys824, which acts as the For EPSP synthase activity. A shikimate kinase region spans residues 864–1056 (NASVIIIGMR…RKKRLSFFVS (193 aa)). Residue 871–878 (GMRGAGKT) participates in ATP binding. Residues 1057–1277 (LTLPDLRDTG…AAPGQLSAAE (221 aa)) form a 3-dehydroquinase region. His1180 serves as the catalytic Proton acceptor; for 3-dehydroquinate dehydratase activity. Lys1208 acts as the Schiff-base intermediate with substrate; for 3-dehydroquinate dehydratase activity in catalysis. The shikimate dehydrogenase stretch occupies residues 1290-1577 (AKKFAIFGKP…RNAVLGTNEK (288 aa)).

In the N-terminal section; belongs to the sugar phosphate cyclases superfamily. Dehydroquinate synthase family. It in the 2nd section; belongs to the EPSP synthase family. The protein in the 3rd section; belongs to the shikimate kinase family. This sequence in the 4th section; belongs to the type-I 3-dehydroquinase family. In the C-terminal section; belongs to the shikimate dehydrogenase family. Homodimer. Zn(2+) is required as a cofactor.

Its subcellular location is the cytoplasm. It catalyses the reaction 7-phospho-2-dehydro-3-deoxy-D-arabino-heptonate = 3-dehydroquinate + phosphate. The enzyme catalyses 3-dehydroquinate = 3-dehydroshikimate + H2O. The catalysed reaction is shikimate + NADP(+) = 3-dehydroshikimate + NADPH + H(+). It carries out the reaction shikimate + ATP = 3-phosphoshikimate + ADP + H(+). It catalyses the reaction 3-phosphoshikimate + phosphoenolpyruvate = 5-O-(1-carboxyvinyl)-3-phosphoshikimate + phosphate. The protein operates within metabolic intermediate biosynthesis; chorismate biosynthesis; chorismate from D-erythrose 4-phosphate and phosphoenolpyruvate: step 2/7. It functions in the pathway metabolic intermediate biosynthesis; chorismate biosynthesis; chorismate from D-erythrose 4-phosphate and phosphoenolpyruvate: step 3/7. It participates in metabolic intermediate biosynthesis; chorismate biosynthesis; chorismate from D-erythrose 4-phosphate and phosphoenolpyruvate: step 4/7. Its pathway is metabolic intermediate biosynthesis; chorismate biosynthesis; chorismate from D-erythrose 4-phosphate and phosphoenolpyruvate: step 5/7. The protein operates within metabolic intermediate biosynthesis; chorismate biosynthesis; chorismate from D-erythrose 4-phosphate and phosphoenolpyruvate: step 6/7. The AROM polypeptide catalyzes 5 consecutive enzymatic reactions in prechorismate polyaromatic amino acid biosynthesis. This chain is Pentafunctional AROM polypeptide, found in Talaromyces stipitatus (strain ATCC 10500 / CBS 375.48 / QM 6759 / NRRL 1006) (Penicillium stipitatum).